A 275-amino-acid chain; its full sequence is Large ribosomal subunit protein uL2 (275 aa).

A disordered region spans residues 223-275; sequence VVMNPVDHPHGGGEGKSSGGRHPVSPWGMPTKGYKTRKNKGTDQYIVRRRNKK.

Belongs to the universal ribosomal protein uL2 family. In terms of assembly, part of the 50S ribosomal subunit. Forms a bridge to the 30S subunit in the 70S ribosome.

Its function is as follows. One of the primary rRNA binding proteins. Required for association of the 30S and 50S subunits to form the 70S ribosome, for tRNA binding and peptide bond formation. It has been suggested to have peptidyltransferase activity; this is somewhat controversial. Makes several contacts with the 16S rRNA in the 70S ribosome. This is Large ribosomal subunit protein uL2 from Psychromonas ingrahamii (strain DSM 17664 / CCUG 51855 / 37).